A 360-amino-acid polypeptide reads, in one-letter code: MRVFNFSAGPAAMPEEVLRQAADEMLDWHGSGMSVMEMSHRGKEFMSIHEAALTDLRDLLGVPASHRILFLQGGGIAENAIVPMNLLGARNTADFVVTGSWSQKSFGEAKKFCTPHLAASGKTENGFTRAPTRAEWQLSDDPAYVHLCTNETIDGVETFEIPDLGDVPLVADVSSHILSRPMDVAKYGVLFGGAQKNIGMAGVTVVIVREDLLDRALSICPSAFEWKTIAANNSLYNTPPTYAIYIAGLVFQWLKRQGGLEAIEARNIEKSKLLYDTIDASSFYLNKVEPAARSRMNVPFFLADETRNEDFLAGAKARGLLQLKGHKSVGGMRASIYNAVPLEGVKALVEYMKDFEQRDA.

Arg41 is an L-glutamate binding site. The pyridoxal 5'-phosphate site is built by Trp101, Thr152, Asp172, and Gln195. Lys196 carries the N6-(pyridoxal phosphate)lysine modification. 237–238 (NT) is a binding site for pyridoxal 5'-phosphate.

It belongs to the class-V pyridoxal-phosphate-dependent aminotransferase family. SerC subfamily. As to quaternary structure, homodimer. The cofactor is pyridoxal 5'-phosphate.

The protein localises to the cytoplasm. It catalyses the reaction O-phospho-L-serine + 2-oxoglutarate = 3-phosphooxypyruvate + L-glutamate. The catalysed reaction is 4-(phosphooxy)-L-threonine + 2-oxoglutarate = (R)-3-hydroxy-2-oxo-4-phosphooxybutanoate + L-glutamate. The protein operates within amino-acid biosynthesis; L-serine biosynthesis; L-serine from 3-phospho-D-glycerate: step 2/3. Its pathway is cofactor biosynthesis; pyridoxine 5'-phosphate biosynthesis; pyridoxine 5'-phosphate from D-erythrose 4-phosphate: step 3/5. In terms of biological role, catalyzes the reversible conversion of 3-phosphohydroxypyruvate to phosphoserine and of 3-hydroxy-2-oxo-4-phosphonooxybutanoate to phosphohydroxythreonine. The protein is Phosphoserine aminotransferase of Burkholderia cenocepacia (strain ATCC BAA-245 / DSM 16553 / LMG 16656 / NCTC 13227 / J2315 / CF5610) (Burkholderia cepacia (strain J2315)).